A 1091-amino-acid chain; its full sequence is MAVAGQLCLLYLSAGLLARLGTAFNLDTREDNVIRKSGDPGSLFGFSLAMHWQLQPEDKRLLLVGAPRAEALPLQRANRTGGLYSCDITSRGPCTRIEFDNDADPMSESKEDQWMGVTVQSQGPGGKVVTCAHRYEKRQHVNTKQESRDIFGRCYVLSQNLRIEDDMDGGDWSFCDGRLRGHEKFGSCQQGVAATFTKDFHYIVFGAPGTYNWKGIVRVEQKNNTFFDMNIFEDGPYEVGGETDHDESLVPVPANSYLGFSLDSGKGIVSKDDITFVSGAPRANHSGAVVLLKRDMKSAHLLPEYIFDGEGLASSFGYDVAVVDLNADGWQDIVIGAPQYFDRDGEVGGAVYVYINQQGKWSNVKPIRLNGTKDSMFGISVKNIGDINQDGYPDIAVGAPYDDLGKVFIYHGSPTGIITKPTQVLEGTSPYFGYSIAGNMDLDRNSYPDLAVGSLSDSVTIFRSRPVINILKTITVTPNRIDLRQKSMCGSPSGICLKVKACFEYTAKPSGYNPPISILGILEAEKERRKSGLSSRVQFRNQGSEPKYTQELTLNRQKQRACMEETLWLQENIRDKLRPIPITASVEIQEPSSRRRVNSLPEVLPILNSNEAKTVQTDVHFLKEGCGDDNVCNSNLKLEYKFGTREGNQDKFSYLPIQKGIPELVLKDQKDIALEITVTNSPSDPRNPRKDGDDAHEAKLIATFPDTLTYSAYRELRAFPEKQLSCVANQNGSQADCELGNPFKRNSSVTFYLILSTTEVTFDTTDLDINLKLETTSNQDNLAPITAKAKVVIELLLSVSGVAKPSQVYFGGTVVGEQAMKSEDEVGSLIEYEFRVINLGKPLKNLGTATLNIQWPKEISNGKWLLYLMKVESKGLEQIVCEPHNEINYLKLKESHNSRKKRELPEKQIDDSRKFSLFPERKYQTLNCSVNVRCVNIRCPLRGLDSKASLVLRSRLWNSTFLEEYSKLNYLDILLRASIDVTAAAQNIKLPHAGTQVRVTVFPSKTVAQYSGVAWWIILLAVLAGILMLALLVFLLWKCGFFKRSRYDDSIPRYHAVRIRKEEREIKDEKHMDNLEKKQWITKWNENESYS.

An N-terminal signal peptide occupies residues 1–23 (MAVAGQLCLLYLSAGLLARLGTA). The Extracellular portion of the chain corresponds to 24–1011 (FNLDTREDNV…FPSKTVAQYS (988 aa)). 7 FG-GAP repeats span residues 30–95 (EDNV…GPCT), 101–166 (NDAD…IEDD), 176–229 (DGRL…FFDM), 244–300 (DHDE…KSAH), 301–363 (LLPE…KWSN), 364–419 (VKPI…GIIT), and 420–479 (KPTQ…VTPN). The N-linked (GlcNAc...) asparagine glycan is linked to Asn-78. 3 cysteine pairs are disulfide-bonded: Cys-86–Cys-94, Cys-131–Cys-154, and Cys-175–Cys-188. N-linked (GlcNAc...) asparagine glycans are attached at residues Asn-223 and Asn-284. Ca(2+)-binding residues include Asp-324, Asn-326, Asp-328, and Asp-332. N-linked (GlcNAc...) asparagine glycosylation is present at Asn-370. 10 residues coordinate Ca(2+): Asp-386, Asn-388, Asp-390, Tyr-392, Asp-394, Asp-441, Asp-443, Asn-445, Tyr-447, and Asp-449. 4 disulfide bridges follow: Cys-489/Cys-496, Cys-502/Cys-562, Cys-626/Cys-632, and Cys-726/Cys-737. N-linked (GlcNAc...) asparagine glycosylation is found at Asn-731, Asn-746, and Asn-927. 2 disulfide bridges follow: Cys-881/Cys-928 and Cys-934/Cys-939. N-linked (GlcNAc...) asparagine glycosylation is present at Asn-958. A helical transmembrane segment spans residues 1012 to 1037 (GVAWWIILLAVLAGILMLALLVFLLW). Over 1038–1091 (KCGFFKRSRYDDSIPRYHAVRIRKEEREIKDEKHMDNLEKKQWITKWNENESYS) the chain is Cytoplasmic. Cys-1039 carries the S-palmitoyl cysteine; by DHHC3 lipid modification. The GFFKR motif signature appears at 1040–1044 (GFFKR). Position 1064 is a phosphoserine (Arg-1064).

It belongs to the integrin alpha chain family. In terms of assembly, heterodimer of an alpha and a beta subunit. The alpha subunit is composed of a heavy and a light chain linked by a disulfide bond. Alpha-6 associates with either beta-1 (ITGB1) or beta-4 (ITGB4) to form ITGA6:ITGB1 and ITGA6:ITGB4, respectively. ITGA6:ITGB1 is found in a complex with CD9; interaction takes place in oocytes and is involved in sperm-egg fusion. ITGA6:ITGB4 is found in a ternary complex with NRG1 and ERBB3. ITGA6:ITGB4 is found in a ternary complex with IGF1 and IGF1R. ITGA6:ITGB4 interacts with IGF2. Interacts with ADAM9. Interacts with RAB21. Interacts with MDK. ITGA6:ITGB1 interacts with MDK; this interaction mediates MDK-induced neurite outgrowth. Interacts with CD82; this interaction down-regulates ITGA6-mediated cell adhesion. In terms of processing, isoforms containing segment A, but not segment B, are the major targets for PMA-induced phosphorylation. Phosphorylation occurs on 'Ser-1064' of isoform alpha-6X1A. Phosphorylation is not required for the induction of integrin alpha-6A/beta-1 high affinity but may reduce the affinity for ligand. Post-translationally, undergoes PLAU-mediated cleavage at residues Arg-595-596-Arg in a time-dependent manner to produce processed integrin alpha-6 (alpha6p). Palmitoylation by DHHC3 enhances stability and cell surface expression. In terms of tissue distribution, expressed at low levels in normal skin tissue with elevated levels in skin tumors.

It is found in the cell membrane. In terms of biological role, integrin alpha-6/beta-1 (ITGA6:ITGB1) is a receptor for laminin on platelets. Integrin alpha-6/beta-1 (ITGA6:ITGB1) is present in oocytes and is involved in sperm-egg fusion. Integrin alpha-6/beta-4 (ITGA6:ITGB4) is a receptor for laminin in epithelial cells and it plays a critical structural role in the hemidesmosome. ITGA6:ITGB4 binds to NRG1 (via EGF domain) and this binding is essential for NRG1-ERBB signaling. ITGA6:ITGB4 binds to IGF1 and this binding is essential for IGF1 signaling. ITGA6:ITGB4 binds to IGF2 and this binding is essential for IGF2 signaling. The polypeptide is Integrin alpha-6 (Itga6) (Mus musculus (Mouse)).